A 366-amino-acid chain; its full sequence is DNA-directed RNA polymerase subunit alpha (366 aa).

An alpha N-terminal domain (alpha-NTD) region spans residues 1-260; sequence MAISDNGGGS…DQLQSFIGSE (260 aa). An alpha C-terminal domain (alpha-CTD) region spans residues 274 to 366; it reads EGALPYDHNL…ENLSKQYSED (93 aa).

The protein belongs to the RNA polymerase alpha chain family. As to quaternary structure, homodimer. The RNAP catalytic core consists of 2 alpha, 1 beta, 1 beta' and 1 omega subunit. When a sigma factor is associated with the core the holoenzyme is formed, which can initiate transcription.

The catalysed reaction is RNA(n) + a ribonucleoside 5'-triphosphate = RNA(n+1) + diphosphate. In terms of biological role, DNA-dependent RNA polymerase catalyzes the transcription of DNA into RNA using the four ribonucleoside triphosphates as substrates. This chain is DNA-directed RNA polymerase subunit alpha, found in Anaplasma marginale (strain St. Maries).